Here is a 242-residue protein sequence, read N- to C-terminus: Uridylate kinase (242 aa).

Lysine 11 to glycine 14 lines the ATP pocket. The segment at glycine 19 to glycine 24 is involved in allosteric activation by GTP. Residue glycine 53 participates in UMP binding. Positions 54 and 58 each coordinate ATP. UMP-binding positions include aspartate 73 and serine 134–threonine 141. Positions 161, 167, and 170 each coordinate ATP.

The protein belongs to the UMP kinase family. As to quaternary structure, homohexamer.

Its subcellular location is the cytoplasm. It catalyses the reaction UMP + ATP = UDP + ADP. The protein operates within pyrimidine metabolism; CTP biosynthesis via de novo pathway; UDP from UMP (UMPK route): step 1/1. With respect to regulation, allosterically activated by GTP. Inhibited by UTP. Catalyzes the reversible phosphorylation of UMP to UDP. The polypeptide is Uridylate kinase (Nostoc sp. (strain PCC 7120 / SAG 25.82 / UTEX 2576)).